Reading from the N-terminus, the 485-residue chain is Alpha-amylase (485 aa).

A signal peptide spans 1 to 18 (MQHLSILLVVLGSSIAFA). Gln-19 carries the post-translational modification Pyrrolidone carboxylic acid. Residues Cys-46 and Cys-102 are joined by a disulfide bond. Ca(2+) contacts are provided by Asn-116, Arg-163, and Asp-172. Cys-152 and Cys-165 are oxidised to a cystine. Arg-200 is a chloride binding site. Residue Asp-202 is the Nucleophile of the active site. His-206 is a Ca(2+) binding site. Glu-238 acts as the Proton donor in catalysis. Asn-301 contacts chloride. Cys-369 and Cys-375 form a disulfide bridge. Asn-423 and Asn-449 each carry an N-linked (GlcNAc...) asparagine glycan. Residues Cys-440 and Cys-452 are joined by a disulfide bond.

Belongs to the glycosyl hydrolase 13 family. In terms of assembly, monomer. It depends on Ca(2+) as a cofactor. Requires chloride as cofactor.

The catalysed reaction is Endohydrolysis of (1-&gt;4)-alpha-D-glucosidic linkages in polysaccharides containing three or more (1-&gt;4)-alpha-linked D-glucose units.. Its function is as follows. Involved in the digestion of starch. The protein is Alpha-amylase of Hypothenemus hampei (Coffee berry borer).